The chain runs to 473 residues: Poly(A) polymerase catalytic subunit (473 aa).

Catalysis depends on residues D193 and D195.

Belongs to the poxviridae poly(A) polymerase catalytic subunit family. As to quaternary structure, heterodimer of a large (catalytic) subunit and a small (regulatory) subunit.

The catalysed reaction is RNA(n) + ATP = RNA(n)-3'-adenine ribonucleotide + diphosphate. Its function is as follows. Polymerase that creates the 3'-poly(A) tail of mRNA's. The sequence is that of Poly(A) polymerase catalytic subunit (PAPL) from Crocodylus johnstoni (Australian freshwater crocodile).